The chain runs to 342 residues: Tetraacyldisaccharide 4'-kinase (342 aa).

Residue 68–75 coordinates ATP; that stretch reads TVGGTGKT.

It belongs to the LpxK family.

It catalyses the reaction a lipid A disaccharide + ATP = a lipid IVA + ADP + H(+). It participates in glycolipid biosynthesis; lipid IV(A) biosynthesis; lipid IV(A) from (3R)-3-hydroxytetradecanoyl-[acyl-carrier-protein] and UDP-N-acetyl-alpha-D-glucosamine: step 6/6. Its function is as follows. Transfers the gamma-phosphate of ATP to the 4'-position of a tetraacyldisaccharide 1-phosphate intermediate (termed DS-1-P) to form tetraacyldisaccharide 1,4'-bis-phosphate (lipid IVA). This chain is Tetraacyldisaccharide 4'-kinase, found in Burkholderia cenocepacia (strain HI2424).